We begin with the raw amino-acid sequence, 140 residues long: Small ribosomal subunit protein uS19 (140 aa).

It belongs to the universal ribosomal protein uS19 family.

Its function is as follows. Protein S19 forms a complex with S13 that binds strongly to the 16S ribosomal RNA. The protein is Small ribosomal subunit protein uS19 of Methanocella arvoryzae (strain DSM 22066 / NBRC 105507 / MRE50).